A 457-amino-acid chain; its full sequence is Protein OS-9 homolog (457 aa).

Positions 1-22 are cleaved as a signal peptide; sequence MIFLPVTSVVFAISWIYSGVSA. 2 N-linked (GlcNAc...) asparagine glycosylation sites follow: asparagine 47 and asparagine 71. Residues 104-222 enclose the MRH domain; it reads NPIEMNTVPI…RLFLPQLCEL (119 aa). A mannooligosaccharide derivative is bound at residue tryptophan 116. N-linked (GlcNAc...) asparagine glycans are attached at residues asparagine 142 and asparagine 147. Intrachain disulfides connect cysteine 174–cysteine 208 and cysteine 189–cysteine 220. A mannooligosaccharide derivative is bound by residues aspartate 175, arginine 181, glutamate 204, and tyrosine 210. N-linked (GlcNAc...) asparagine glycosylation occurs at asparagine 389.

The protein belongs to the OS-9 family. In terms of assembly, interacts with missfolded ER lumenal proteins.

It localises to the endoplasmic reticulum membrane. Functionally, lectin involved in the quality control of the secretory pathway. As a member of the endoplasmic reticulum-associated degradation lumenal (ERAD-L) surveillance system, targets misfolded endoplasmic reticulum lumenal glycoproteins for degradation. The protein is Protein OS-9 homolog (YOS9) of Kluyveromyces lactis (strain ATCC 8585 / CBS 2359 / DSM 70799 / NBRC 1267 / NRRL Y-1140 / WM37) (Yeast).